Here is an 88-residue protein sequence, read N- to C-terminus: Large ribosomal subunit protein bL27 (88 aa).

The tract at residues 1–21 (MAHKKGASSSRNGRDSNAKRL) is disordered.

This sequence belongs to the bacterial ribosomal protein bL27 family.

The chain is Large ribosomal subunit protein bL27 from Thermobifida fusca (strain YX).